The sequence spans 627 residues: Chaperone protein HtpG (627 aa).

The a; substrate-binding stretch occupies residues 1-339 (MKGQETRGFQ…SNDLPLNVSR (339 aa)). Residues 340–555 (EILQDSRVTQ…ADEMSTQMAK (216 aa)) are b. The segment at 556–627 (LFAAAGQQAP…IRRMNQLLSA (72 aa)) is c.

Belongs to the heat shock protein 90 family. In terms of assembly, homodimer.

The protein localises to the cytoplasm. Molecular chaperone. Has ATPase activity. This chain is Chaperone protein HtpG, found in Pectobacterium atrosepticum (strain SCRI 1043 / ATCC BAA-672) (Erwinia carotovora subsp. atroseptica).